Here is a 465-residue protein sequence, read N- to C-terminus: tRNA modification GTPase MnmE (465 aa).

3 residues coordinate (6S)-5-formyl-5,6,7,8-tetrahydrofolate: Arg21, Glu85, and Lys124. Positions 220–387 constitute a TrmE-type G domain; that stretch reads GVPVAIIGET…LQQRLVAAAH (168 aa). Asn230 contacts K(+). Residues 230–235, 249–255, and 274–277 contribute to the GTP site; these read NAGKST, SDIHGTT, and DTAG. Ser234 contacts Mg(2+). 3 residues coordinate K(+): Ser249, Ile251, and Thr254. Thr255 serves as a coordination point for Mg(2+). Lys465 contributes to the (6S)-5-formyl-5,6,7,8-tetrahydrofolate binding site.

Belongs to the TRAFAC class TrmE-Era-EngA-EngB-Septin-like GTPase superfamily. TrmE GTPase family. As to quaternary structure, homodimer. Heterotetramer of two MnmE and two MnmG subunits. The cofactor is K(+).

Its subcellular location is the cytoplasm. Its function is as follows. Exhibits a very high intrinsic GTPase hydrolysis rate. Involved in the addition of a carboxymethylaminomethyl (cmnm) group at the wobble position (U34) of certain tRNAs, forming tRNA-cmnm(5)s(2)U34. The polypeptide is tRNA modification GTPase MnmE (Bacteroides fragilis (strain YCH46)).